The chain runs to 484 residues: PTS system N-acetylmuramic acid-specific EIIBC component (484 aa).

Residues 1 to 89 (MAKITTSMIQ…NEMMEGEEDN (89 aa)) form the PTS EIIB type-1 domain. Cysteine 28 (phosphocysteine intermediate; for EIIB activity) is an active-site residue. Residues 83-106 (MEGEEDNSASTTAESRDLKDVASE) form a disordered region. Positions 96-106 (ESRDLKDVASE) are enriched in basic and acidic residues. Residues 124 to 484 (SKFATIFTPL…FFGTKNVDLS (361 aa)) enclose the PTS EIIC type-1 domain. 10 helical membrane passes run 126–146 (FATI…LLGF), 168–188 (LILY…ILIG), 194–214 (AFGG…LGYN), 232–252 (GIDP…GAGV), 273–293 (TLLI…GVLF), 312–332 (ILAG…FVPV), 345–365 (LFPI…ALYA), 379–399 (GSII…VTLP), 404–424 (FITA…VSYM), and 451–471 (IFAG…AGFL).

The protein resides in the cell inner membrane. It carries out the reaction N-acetyl-beta-D-muramate(out) + N(pros)-phospho-L-histidyl-[protein] = N-acetyl-beta-D-muramate 6-phosphate(in) + L-histidyl-[protein]. Functionally, the phosphoenolpyruvate-dependent sugar phosphotransferase system (sugar PTS), a major carbohydrate active transport system, catalyzes the phosphorylation of incoming sugar substrates concomitantly with their translocation across the cell membrane. This system is involved in N-acetylmuramic acid (MurNAc) transport, yielding cytoplasmic MurNAc-6-P. Is also able to take up anhydro-N-acetylmuramic acid (anhMurNAc), but cannot phosphorylate the carbon 6, probably because of the 1,6-anhydro ring. In Aliivibrio fischeri (strain ATCC 700601 / ES114) (Vibrio fischeri), this protein is PTS system N-acetylmuramic acid-specific EIIBC component (murP).